Consider the following 160-residue polypeptide: Ribosomal RNA large subunit methyltransferase H (160 aa).

Positions 76 and 108 each coordinate S-adenosyl-L-methionine.

It belongs to the RNA methyltransferase RlmH family. Homodimer.

The protein resides in the cytoplasm. The catalysed reaction is pseudouridine(1915) in 23S rRNA + S-adenosyl-L-methionine = N(3)-methylpseudouridine(1915) in 23S rRNA + S-adenosyl-L-homocysteine + H(+). In terms of biological role, specifically methylates the pseudouridine at position 1915 (m3Psi1915) in 23S rRNA. This is Ribosomal RNA large subunit methyltransferase H from Rhodopseudomonas palustris (strain BisB18).